A 553-amino-acid polypeptide reads, in one-letter code: Dihydrolipoyllysine-residue acetyltransferase component of pyruvate dehydrogenase complex (553 aa).

Positions 2–77 (AFSVQMPALG…EVGGELAVIG (76 aa)) constitute a Lipoyl-binding 1 domain. Lys-43 is subject to N6-lipoyllysine. Residues 81-125 (DAGEAAAPAPEKVPAAQPESKPAPEPPPVQPTSGAPAGGDAKPVL) form a disordered region. Over residues 84-100 (EAAAPAPEKVPAAQPES) the composition is skewed to low complexity. A compositionally biased stretch (pro residues) spans 101 to 110 (KPAPEPPPVQ). A Lipoyl-binding 2 domain is found at 121-196 (AKPVLMPELG…PVGGELARIG (76 aa)). Position 162 is an N6-lipoyllysine (Lys-162). Disordered regions lie at residues 204–238 (APAP…AGAA) and 278–321 (AAAE…TQKA). The segment covering 206–232 (APKPAPKPVPEPAPTPKAEPAPSPPAA) has biased composition (pro residues). In terms of domain architecture, Peripheral subunit-binding (PSBD) spans 243-280 (YVTPLVRKLASENNIDLAGVTGTGVGGRIRKQDVLAAA). Over residues 288-300 (APAPAAQAAAAPA) the composition is skewed to low complexity. Residues His-523 and Asp-527 contribute to the active site.

This sequence belongs to the 2-oxoacid dehydrogenase family. In terms of assembly, forms a 24-polypeptide structural core with octahedral symmetry. Part of the PDH complex, consisting of multiple copies of AceE (E1), DlaT (E2) and Lpd (E3). (R)-lipoate serves as cofactor.

The catalysed reaction is N(6)-[(R)-dihydrolipoyl]-L-lysyl-[protein] + acetyl-CoA = N(6)-[(R)-S(8)-acetyldihydrolipoyl]-L-lysyl-[protein] + CoA. In terms of biological role, component of the pyruvate dehydrogenase (PDH) complex, that catalyzes the overall conversion of pyruvate to acetyl-CoA and CO(2). The polypeptide is Dihydrolipoyllysine-residue acetyltransferase component of pyruvate dehydrogenase complex (dlaT) (Mycobacterium bovis (strain ATCC BAA-935 / AF2122/97)).